Consider the following 637-residue polypeptide: Sodium-dependent nutrient amino acid transporter 1 (637 aa).

Polar residues predominate over residues 1-17 (MELKTMPQNGANAGTQH). The interval 1-39 (MELKTMPQNGANAGTQHNNNSNNKPDNNEKEAQKKEPER) is disordered. Residues 1 to 47 (MELKTMPQNGANAGTQHNNNSNNKPDNNEKEAQKKEPERTNWSNGLE) lie on the Cytoplasmic side of the membrane. Basic and acidic residues predominate over residues 26 to 39 (DNNEKEAQKKEPER). Helical transmembrane passes span 48 to 68 (FLMSCISVSVGLGNVWRFPFT), 75 to 95 (GAFLIPYIIVLFLIGKPMYYL), and 128 to 148 (TICIITYYSSLLALTVYYLFV). N-linked (GlcNAc...) asparagine glycans are attached at residues Asn181 and Asn195. Helical transmembrane passes span 225–245 (PDWKLTIALFVSWVVIFLVIM), 254–274 (AAYFLALFPYVVLFALLGRAV), 303–323 (AVVQCFFSLAVGCGPIIMFAS), 337–357 (IVTTLDTLTSLLGGITIFAIL), 397–417 (LFSALFFFMLFVLGIGSIVAL), 443–463 (ICGFLMGLVYVTPGGQWILTL), 470–490 (TYVVFILAIFELAGIVWIYGL), 515–535 (FFTPIMMIVIFIYSMVTISPI), and 549–569 (AGWVLFAVGAAQFPLWGWWYI).

This sequence belongs to the sodium:neurotransmitter symporter (SNF) (TC 2.A.22) family.

The protein resides in the membrane. Its function is as follows. Unusual broad substrate spectrum amino acid:sodium cotransporter that promotes absorption of the D isomers of essential amino acids. Neutral amino acids are the preferred substrates, especially methionine and phenylalanine. This Drosophila virilis (Fruit fly) protein is Sodium-dependent nutrient amino acid transporter 1.